The sequence spans 1048 residues: Bifunctional heparan sulfate N-deacetylase/N-sulfotransferase (1048 aa).

Residues 1 to 172 (MTISGGNQHN…RRCFGINVRR (172 aa)) are Cytoplasmic-facing. Residues 173–192 (CVLALLAITMVSIFYYTHYV) form a helical; Signal-anchor for type II membrane protein membrane-spanning segment. Residues 192–752 (VDTGVFNGLI…VRHKKIWSKT (561 aa)) are heparan sulfate N-deacetylase. Over 193–1048 (DTGVFNGLIQ…WLKDDLSTGT (856 aa)) the chain is Lumenal. Residues asparagine 388 and asparagine 555 are each glycosylated (N-linked (GlcNAc...) asparagine). The tract at residues 753–1048 (KNCDSLPKFL…WLKDDLSTGT (296 aa)) is heparan sulfate N-sulfotransferase. Lysine 768 serves as the catalytic For sulfotransferase activity. 768 to 772 (KTGTT) serves as a coordination point for 3'-phosphoadenylyl sulfate. Asparagine 823 is a glycosylation site (N-linked (GlcNAc...) asparagine). 3'-phosphoadenylyl sulfate is bound at residue serine 877. A glycan (N-linked (GlcNAc...) asparagine) is linked at asparagine 892. Cysteine 983 and cysteine 993 are oxidised to a cystine. Position 998-1002 (998-1002 (KGRQY)) interacts with 3'-phosphoadenylyl sulfate.

It belongs to the sulfotransferase 1 family. NDST subfamily. As to quaternary structure, monomer.

It localises to the golgi apparatus membrane. The enzyme catalyses alpha-D-glucosaminyl-[heparan sulfate](n) + 3'-phosphoadenylyl sulfate = N-sulfo-alpha-D-glucosaminyl-[heparan sulfate](n) + adenosine 3',5'-bisphosphate + 2 H(+). It functions in the pathway glycan metabolism; heparan sulfate biosynthesis. The protein operates within glycan metabolism; heparin biosynthesis. Functionally, essential bifunctional enzyme that catalyzes both the N-deacetylation and the N-sulfation of glucosamine (GlcNAc) of the glycosaminoglycan in heparan sulfate. Modifies the GlcNAc-GlcA disaccharide repeating sugar backbone to make N-sulfated heparosan, a prerequisite substrate for later modifications in heparin biosynthesis. Plays a role in diffusion of morphogen wingless (wg) via its role in heparan sulfate proteoglycans (HSPGs) biosynthesis, HSPGs being required for movement of wg morphogens. Required for wg signaling during both embryonic and imaginal disk development. Also required for FGF receptor signaling. The chain is Bifunctional heparan sulfate N-deacetylase/N-sulfotransferase (sfl) from Drosophila melanogaster (Fruit fly).